Consider the following 198-residue polypeptide: Paired-like homeodomain transcription factor LEUTX (198 aa).

Positions 33 to 67 (PSLATMGKLASKLQLDLSVVKIWFKNQRAKWKRQQ) form a DNA-binding region, homeobox. The disordered stretch occupies residues 65–133 (RQQRQQMQTR…PGGASASARV (69 aa)). Residues 79 to 190 (PANQTTSVKK…NQYLFPVCLE (112 aa)) form an LEUTX region region. Positions 110–119 (ANDHDLREPS) are enriched in basic and acidic residues. 4 short sequence motifs (9aaTAD) span residues 125 to 136 (GGASASARVSSW), 153 to 161 (PPWASTLFE), 163 to 171 (DEFVKIYDL), and 178 to 186 (SSLNQYLFP).

This sequence belongs to the paired homeobox family.

The protein resides in the nucleus. Functionally, paired-like homeobox transcription factor involved in embryogenesis. May act as a regulator of embryo genome activation. Binds to a 36 bp DNA elements containing a 5'-TAATCC-3' sequence motif, referred to as EEA motif (EGA-enriched Alu-motif), present in the promoters of target genes activated in early embryos. Inactive transcriptional activity. The chain is Paired-like homeodomain transcription factor LEUTX from Homo sapiens (Human).